Here is a 513-residue protein sequence, read N- to C-terminus: ATP synthase subunit alpha (513 aa).

169-176 contacts ATP; sequence GDRQTGKT.

This sequence belongs to the ATPase alpha/beta chains family. As to quaternary structure, F-type ATPases have 2 components, CF(1) - the catalytic core - and CF(0) - the membrane proton channel. CF(1) has five subunits: alpha(3), beta(3), gamma(1), delta(1), epsilon(1). CF(0) has three main subunits: a(1), b(2) and c(9-12). The alpha and beta chains form an alternating ring which encloses part of the gamma chain. CF(1) is attached to CF(0) by a central stalk formed by the gamma and epsilon chains, while a peripheral stalk is formed by the delta and b chains.

The protein resides in the cell inner membrane. The catalysed reaction is ATP + H2O + 4 H(+)(in) = ADP + phosphate + 5 H(+)(out). Produces ATP from ADP in the presence of a proton gradient across the membrane. The alpha chain is a regulatory subunit. The polypeptide is ATP synthase subunit alpha (Vibrio vulnificus (strain CMCP6)).